The sequence spans 308 residues: Putative S-adenosyl-L-methionine-dependent methyltransferase Mb3816c (308 aa).

Residues Asp-131 and 160–161 (DL) each bind S-adenosyl-L-methionine.

The protein belongs to the UPF0677 family.

Exhibits S-adenosyl-L-methionine-dependent methyltransferase activity. The chain is Putative S-adenosyl-L-methionine-dependent methyltransferase Mb3816c from Mycobacterium bovis (strain ATCC BAA-935 / AF2122/97).